Here is a 410-residue protein sequence, read N- to C-terminus: Large ribosomal subunit protein uL4 (410 aa).

It belongs to the universal ribosomal protein uL4 family.

The protein resides in the cytoplasm. This is Large ribosomal subunit protein uL4 (RPL4) from Tetrahymena thermophila (strain SB210).